The following is a 479-amino-acid chain: Dihydrolipoyl dehydrogenase, mitochondrial (479 aa).

The N-terminal 19 residues, 1 to 19, are a transit peptide targeting the mitochondrion; the sequence is FNRXSPGLQGVSSVPLRTY. Lys-50 is modified (N6-acetyllysine; alternate). Lys-50 is modified (N6-succinyllysine; alternate). Residues 55 to 64 and Lys-73 each bind FAD; that span reads EKNETLGGTC. Residues Cys-64 and Cys-69 are joined by a disulfide bond. N6-acetyllysine; alternate is present on residues Lys-88, Lys-106, Lys-116, and Lys-127. Lys-88, Lys-106, Lys-116, and Lys-127 each carry N6-succinyllysine; alternate. Residue Gly-138 participates in FAD binding. An N6-succinyllysine mark is found at Lys-143 and Lys-150. Residue 167–169 coordinates FAD; it reads TGS. Residues 204 to 211 and Glu-227 each bind NAD(+); that span reads GAGVIGVE. An N6-succinyllysine mark is found at Lys-257 and Lys-261. Val-262 lines the NAD(+) pocket. Ser-269 carries the post-translational modification Phosphoserine. Residue Gly-298 coordinates NAD(+). Position 330 is an N6-acetyllysine (Lys-330). Residues Asp-339 and 345–348 contribute to the FAD site; that span reads MLAH. An N6-acetyllysine; alternate modification is found at Lys-394. Residue Lys-394 is modified to N6-succinyllysine; alternate. 2 positions are modified to N6-acetyllysine: Lys-401 and Lys-404. The residue at position 414 (Lys-414) is an N6-succinyllysine. His-471 (proton acceptor) is an active-site residue.

Belongs to the class-I pyridine nucleotide-disulfide oxidoreductase family. As to quaternary structure, homodimer. Part of the multimeric pyruvate dehydrogenase complex that contains multiple copies of pyruvate dehydrogenase (subunits PDHA (PDHA1 or PDHA2) and PDHB, E1), dihydrolipoamide acetyltransferase (DLAT, E2) and lipoamide dehydrogenase (DLD, E3). These subunits are bound to an inner core composed of about 48 DLAT and 12 PDHX molecules (by non covalent bonds). The 2-oxoglutarate dehydrogenase complex is composed of OGDH (2-oxoglutarate dehydrogenase; E1), DLST (dihydrolipoamide succinyltransferase; E2) and DLD (dihydrolipoamide dehydrogenase; E3). It contains multiple copies of the three enzymatic components (E1, E2 and E3). In the nucleus, the 2-oxoglutarate dehydrogenase complex associates with KAT2A. Interacts with PDHX. FAD is required as a cofactor. Tyrosine phosphorylated. In terms of tissue distribution, expressed in testis (at protein level).

The protein resides in the mitochondrion matrix. It is found in the nucleus. The protein localises to the cell projection. Its subcellular location is the cilium. It localises to the flagellum. The protein resides in the cytoplasmic vesicle. It is found in the secretory vesicle. The protein localises to the acrosome. The catalysed reaction is N(6)-[(R)-dihydrolipoyl]-L-lysyl-[protein] + NAD(+) = N(6)-[(R)-lipoyl]-L-lysyl-[protein] + NADH + H(+). In terms of biological role, lipoamide dehydrogenase is a component of the glycine cleavage system as well as an E3 component of three alpha-ketoacid dehydrogenase complexes (pyruvate-, alpha-ketoglutarate-, and branched-chain amino acid-dehydrogenase complex). The 2-oxoglutarate dehydrogenase complex is mainly active in the mitochondrion. A fraction of the 2-oxoglutarate dehydrogenase complex also localizes in the nucleus and is required for lysine succinylation of histones: associates with KAT2A on chromatin and provides succinyl-CoA to histone succinyltransferase KAT2A. In monomeric form may have additional moonlighting function as serine protease. Involved in the hyperactivation of spermatazoa during capacitation and in the spermatazoal acrosome reaction. The chain is Dihydrolipoyl dehydrogenase, mitochondrial (DLD) from Mesocricetus auratus (Golden hamster).